The following is a 446-amino-acid chain: Telomere-binding protein 51 kDa subunit (446 aa).

The protein belongs to the telombin family. In terms of assembly, monomer.

Its subcellular location is the nucleus. The protein localises to the chromosome. It localises to the telomere. May function as protective capping of the single-stranded telomeric overhang. May also participate in telomere length regulation during DNA replication. Binds specifically to the T4G4-containing extension on the 3'strand and protects this region of the telomere from nuclease digestion and chemical modification. This chain is Telomere-binding protein 51 kDa subunit, found in Euplotes crassus.